The sequence spans 209 residues: MDQQKIPQATAKRLPLYYRFIQNLSLSGKQRVSSAELSEAVKVDSATIRRDFSYFGALGKKGYGYNVNYLLSFFRETLDQDDITRVALIGVGNLGTAFLHYNFTKNNNTKIEMAFDVSEEKVGTEIGGIPVYHLDELEERLSTDIQVAILTVPATVAQSVADRLAETNVHGILNFTPARLNVSENIRIHHIDLAVELQTLVYFLKNYPQ.

The H-T-H motif DNA-binding region spans 16 to 55 (LYYRFIQNLSLSGKQRVSSAELSEAVKVDSATIRRDFSYF). 90 to 95 (GVGNLG) serves as a coordination point for NAD(+).

The protein belongs to the transcriptional regulatory Rex family. In terms of assembly, homodimer.

The protein resides in the cytoplasm. Functionally, modulates transcription in response to changes in cellular NADH/NAD(+) redox state. In Bacillus mycoides (strain KBAB4) (Bacillus weihenstephanensis), this protein is Redox-sensing transcriptional repressor Rex.